A 121-amino-acid polypeptide reads, in one-letter code: Large ribosomal subunit protein bL12 (121 aa).

The protein belongs to the bacterial ribosomal protein bL12 family. Homodimer. Part of the ribosomal stalk of the 50S ribosomal subunit. Forms a multimeric L10(L12)X complex, where L10 forms an elongated spine to which 2 to 4 L12 dimers bind in a sequential fashion. Binds GTP-bound translation factors.

Forms part of the ribosomal stalk which helps the ribosome interact with GTP-bound translation factors. Is thus essential for accurate translation. The protein is Large ribosomal subunit protein bL12 of Streptococcus agalactiae serotype Ia (strain ATCC 27591 / A909 / CDC SS700).